The following is a 128-amino-acid chain: UPF0102 protein RPB_0420 (128 aa).

It belongs to the UPF0102 family.

The sequence is that of UPF0102 protein RPB_0420 from Rhodopseudomonas palustris (strain HaA2).